A 214-amino-acid polypeptide reads, in one-letter code: Ribonuclease T (214 aa).

In terms of domain architecture, Exonuclease spans 20-195; that stretch reads VVVDVETAGF…YDTQQTAELF (176 aa). The Mg(2+) site is built by D23, E25, H182, and D187. H182 acts as the Proton donor/acceptor in catalysis.

It belongs to the RNase T family. Homodimer. It depends on Mg(2+) as a cofactor.

In terms of biological role, trims short 3' overhangs of a variety of RNA species, leaving a one or two nucleotide 3' overhang. Responsible for the end-turnover of tRNA: specifically removes the terminal AMP residue from uncharged tRNA (tRNA-C-C-A). Also appears to be involved in tRNA biosynthesis. The chain is Ribonuclease T from Vibrio campbellii (strain ATCC BAA-1116).